The chain runs to 101 residues: Unclassified hydrophobin dewD (101 aa).

The N-terminal stretch at 1–21 is a signal peptide; it reads MHLSTSAAAILALSLAGPTMA. Disulfide bonds link Cys-27/Cys-81, Cys-41/Cys-73, Cys-42/Cys-60, and Cys-82/Cys-91.

Self-assembles to form functional amyloid fibrils called rodlets. Self-assembly into fibrillar rodlets occurs spontaneously at hydrophobic:hydrophilic interfaces and the rodlets further associate laterally to form amphipathic monolayers.

The protein localises to the secreted. The protein resides in the spore wall. In terms of biological role, aerial growth, conidiation, and dispersal of filamentous fungi in the environment rely upon a capability of their secreting small amphipathic proteins called hydrophobins (HPBs) with low sequence identity. Class I can self-assemble into an outermost layer of rodlet bundles on aerial cell surfaces, conferring cellular hydrophobicity that supports fungal growth, development and dispersal; whereas Class II form highly ordered films at water-air interfaces through intermolecular interactions but contribute nothing to the rodlet structure. DewD is an unclassified hydrophobin that contributes to the hydrophobicity of the spore surface. In Emericella nidulans (strain FGSC A4 / ATCC 38163 / CBS 112.46 / NRRL 194 / M139) (Aspergillus nidulans), this protein is Unclassified hydrophobin dewD.